A 442-amino-acid polypeptide reads, in one-letter code: Histidine--tRNA ligase (442 aa).

It belongs to the class-II aminoacyl-tRNA synthetase family. Homodimer.

It is found in the cytoplasm. It catalyses the reaction tRNA(His) + L-histidine + ATP = L-histidyl-tRNA(His) + AMP + diphosphate + H(+). The polypeptide is Histidine--tRNA ligase (Wolinella succinogenes (strain ATCC 29543 / DSM 1740 / CCUG 13145 / JCM 31913 / LMG 7466 / NCTC 11488 / FDC 602W) (Vibrio succinogenes)).